The following is a 1336-amino-acid chain: Coiled-coil and C2 domain-containing protein 2A (1336 aa).

Disordered stretches follow at residues 1-29 (MEAALSRKTAKKKRKTHTTRGYRKREQEV) and 70-97 (VEDCQESDEDSGGELAEEPTDSPSQTFI). Positions 8 to 23 (KTAKKKRKTHTTRGYR) are enriched in basic residues. Acidic residues predominate over residues 70–89 (VEDCQESDEDSGGELAEEPT). Residues 136 to 156 (LSDLSELKDSQIRMLNRYQEQ) are a coiled coil. The C2 domain maps to 755–915 (PREPSGWSGH…LASRTFEGCI (161 aa)).

As to quaternary structure, probable component of the tectonic-like complex (also named MKS complex), composed of B9d1, B9d2, Cc2d2a, Mks1 and tctn. Expressed in the antennae of chordotonal neurons and male germ cells (at protein level).

It is found in the cytoplasm. The protein localises to the cytoskeleton. It localises to the cilium basal body. Its subcellular location is the microtubule organizing center. The protein resides in the centrosome. It is found in the centriole. Its function is as follows. Probable component of the tectonic-like complex (also named MKS complex), a complex localized at the transition zone of primary cilia. Required for ciliary structure and function. In Drosophila melanogaster (Fruit fly), this protein is Coiled-coil and C2 domain-containing protein 2A.